The sequence spans 735 residues: Lebercilin-like protein (735 aa).

2 disordered regions span residues 12–54 and 91–115; these read TEAH…NGSV and EKPL…RGQK. Positions 43–53 are enriched in low complexity; that stretch reads QSQNSQASNGS. Residues 205 to 335 are a coiled coil; sequence TAKHQNEVKN…QQKLKEKDRE (131 aa). 4 disordered regions span residues 356 to 379, 473 to 597, 632 to 657, and 685 to 735; these read YPKV…NMRH, SKEV…PRKH, KHRS…AGAR, and GRAG…KTVV. The span at 487-525 shows a compositional bias: basic and acidic residues; sequence TPRRPKENKEDQEKRAIPAEAEPTAKESEAHKDAEDKAL. The segment covering 528–541 has biased composition (low complexity); sequence AAGNAGDAGDAGDA. Composition is skewed to basic and acidic residues over residues 542–553, 573–588, and 632–641; these read GNDREVVGEHKV, EVHG…EPGR, and KHRSEQELRL. Positions 689–707 are enriched in polar residues; it reads SSDSEAVSKSPQTGPQASA.

Belongs to the LCA5 family.

In Mus musculus (Mouse), this protein is Lebercilin-like protein.